A 174-amino-acid polypeptide reads, in one-letter code: Crossover junction endodeoxyribonuclease RuvC (174 aa).

Residues aspartate 8, glutamate 67, and aspartate 139 contribute to the active site. Positions 8, 67, and 139 each coordinate Mg(2+).

It belongs to the RuvC family. As to quaternary structure, homodimer which binds Holliday junction (HJ) DNA. The HJ becomes 2-fold symmetrical on binding to RuvC with unstacked arms; it has a different conformation from HJ DNA in complex with RuvA. In the full resolvosome a probable DNA-RuvA(4)-RuvB(12)-RuvC(2) complex forms which resolves the HJ. The cofactor is Mg(2+).

It is found in the cytoplasm. The enzyme catalyses Endonucleolytic cleavage at a junction such as a reciprocal single-stranded crossover between two homologous DNA duplexes (Holliday junction).. In terms of biological role, the RuvA-RuvB-RuvC complex processes Holliday junction (HJ) DNA during genetic recombination and DNA repair. Endonuclease that resolves HJ intermediates. Cleaves cruciform DNA by making single-stranded nicks across the HJ at symmetrical positions within the homologous arms, yielding a 5'-phosphate and a 3'-hydroxyl group; requires a central core of homology in the junction. The consensus cleavage sequence is 5'-(A/T)TT(C/G)-3'. Cleavage occurs on the 3'-side of the TT dinucleotide at the point of strand exchange. HJ branch migration catalyzed by RuvA-RuvB allows RuvC to scan DNA until it finds its consensus sequence, where it cleaves and resolves the cruciform DNA. The chain is Crossover junction endodeoxyribonuclease RuvC from Pseudomonas paraeruginosa (strain DSM 24068 / PA7) (Pseudomonas aeruginosa (strain PA7)).